Consider the following 92-residue polypeptide: Kappa-scoloptoxin(15)-Ssd2a (92 aa).

Residues 1–20 (MKMVYLGLFLIITSCVISSG) form the signal peptide.

Contains 3 disulfide bonds. Expressed by the venom gland.

It is found in the secreted. Its function is as follows. Inhibits voltage-gated potassium channels (Kv) (IC(50)=about 10 nM), when tested on DRG neurons. The sequence is that of Kappa-scoloptoxin(15)-Ssd2a from Scolopendra dehaani (Thai centipede).